The primary structure comprises 119 residues: Large ribosomal subunit protein uL18 (119 aa).

It belongs to the universal ribosomal protein uL18 family. Part of the 50S ribosomal subunit; part of the 5S rRNA/L5/L18/L25 subcomplex. Contacts the 5S and 23S rRNAs.

Its function is as follows. This is one of the proteins that bind and probably mediate the attachment of the 5S RNA into the large ribosomal subunit, where it forms part of the central protuberance. The polypeptide is Large ribosomal subunit protein uL18 (Nitratidesulfovibrio vulgaris (strain DSM 19637 / Miyazaki F) (Desulfovibrio vulgaris)).